An 884-amino-acid polypeptide reads, in one-letter code: Translation initiation factor IF-2 (884 aa).

The tract at residues 93-288 is disordered; the sequence is VNTPEAEQAK…KGKRKPSTLQ (196 aa). Positions 99 to 209 are enriched in basic and acidic residues; that stretch reads EQAKAEEQAQ…KMAAENEGKW (111 aa). The span at 216–229 shows a compositional bias: polar residues; sequence QTESADYHVTTSQH. Residues 231 to 246 show a composition bias toward basic and acidic residues; sequence RAAEDENDAKVEGDRR. Basic residues predominate over residues 247–261; that stretch reads SRTRGGKATKQKKGN. A compositionally biased stretch (basic and acidic residues) spans 262–275; it reads KLSESKADREEARA. One can recognise a tr-type G domain in the interval 383–552; sequence HRAPVVTIMG…LLQAEVLELK (170 aa). Residues 392–399 are G1; that stretch reads GHVDHGKT. 392 to 399 is a GTP binding site; sequence GHVDHGKT. The tract at residues 417 to 421 is G2; the sequence is GITQH. Residues 438–441 are G3; it reads DTPG. Residues 438 to 442 and 492 to 495 contribute to the GTP site; these read DTPGH and NKID. The segment at 492-495 is G4; that stretch reads NKID. The segment at 528 to 530 is G5; it reads SAK.

This sequence belongs to the TRAFAC class translation factor GTPase superfamily. Classic translation factor GTPase family. IF-2 subfamily.

It is found in the cytoplasm. Its function is as follows. One of the essential components for the initiation of protein synthesis. Protects formylmethionyl-tRNA from spontaneous hydrolysis and promotes its binding to the 30S ribosomal subunits. Also involved in the hydrolysis of GTP during the formation of the 70S ribosomal complex. This chain is Translation initiation factor IF-2, found in Yersinia pestis bv. Antiqua (strain Antiqua).